Reading from the N-terminus, the 670-residue chain is Methionine--tRNA ligase (670 aa).

The short motif at 14–24 (PYANGHLHLGH) is the 'HIGH' region element. Zn(2+) contacts are provided by C145, C148, C158, and C161. Residues 330-334 (KMSKS) carry the 'KMSKS' region motif. An ATP-binding site is contributed by K333. Positions 570–670 (DFAKVDLRIA…AGAFPGMKVK (101 aa)) constitute a tRNA-binding domain.

The protein belongs to the class-I aminoacyl-tRNA synthetase family. MetG type 1 subfamily. As to quaternary structure, homodimer. Zn(2+) is required as a cofactor.

The protein resides in the cytoplasm. It carries out the reaction tRNA(Met) + L-methionine + ATP = L-methionyl-tRNA(Met) + AMP + diphosphate. In terms of biological role, is required not only for elongation of protein synthesis but also for the initiation of all mRNA translation through initiator tRNA(fMet) aminoacylation. In Legionella pneumophila (strain Corby), this protein is Methionine--tRNA ligase.